The chain runs to 225 residues: KDP operon transcriptional regulatory protein KdpE (225 aa).

Residues 3 to 116 (NVLIVEDEQA…ELQARLRVAL (114 aa)) enclose the Response regulatory domain. Asp-52 bears the 4-aspartylphosphate mark. Positions 126–225 (DPLVKFSDVT…ETGIGYRFML (100 aa)) form a DNA-binding region, ompR/PhoB-type.

Phosphorylated by KdpD.

The protein resides in the cytoplasm. In terms of biological role, member of the two-component regulatory system KdpD/KdpE involved in the regulation of the kdp operon. The polypeptide is KDP operon transcriptional regulatory protein KdpE (kdpE) (Escherichia coli (strain K12)).